Here is a 268-residue protein sequence, read N- to C-terminus: MAAIRMGKLTTMPAGLIYASVSVHAAKQEESKKQLVKPEQLPIYTAPPLQSKYVEEQPGHLQMGFASIRTATGCYIGWCKGVYVFVKNGIMDTVQFGKDAYVYLKNPPRDFLPKMGVITVSGLAGLVSARKGSKFKKITYPLGLATLGATVCYPVQSVIIAKVTAKKVYATSQQIFGAVKSLWTKSSKEESLPKPKEKTKLGSSSEIEVPAKTTHVLKHSVPLPTELSSEAKTKSESTSGATQFMPDPKLMDHGQSHPEDIDMYSTRS.

The transit peptide at 1–27 (MAAIRMGKLTTMPAGLIYASVSVHAAK) directs the protein to the mitochondrion. Topologically, residues 28 to 110 (QEESKKQLVK…YVYLKNPPRD (83 aa)) are mitochondrial intermembrane. Residues 111–129 (FLPKMGVITVSGLAGLVSA) traverse the membrane as a helical segment. The Mitochondrial matrix portion of the chain corresponds to 130 to 137 (RKGSKFKK). A helical transmembrane segment spans residues 138-155 (ITYPLGLATLGATVCYPV). The Mitochondrial intermembrane segment spans residues 156 to 268 (QSVIIAKVTA…EDIDMYSTRS (113 aa)). Residues 187 to 200 (SKEESLPKPKEKTK) show a composition bias toward basic and acidic residues. Residues 187 to 268 (SKEESLPKPK…EDIDMYSTRS (82 aa)) form a disordered region. S204 is modified (phosphoserine). A compositionally biased stretch (basic and acidic residues) spans 249–260 (KLMDHGQSHPED).

This sequence belongs to the apolipoprotein O/MICOS complex subunit Mic27 family. In terms of assembly, component of the mitochondrial contact site and cristae organizing system (MICOS) complex, composed of at least MICOS10/MIC10, CHCHD3/MIC19, CHCHD6/MIC25, APOOL/MIC27, IMMT/MIC60, APOO/MIC23/MIC26 and MICOS13/MIC13. This complex was also known under the names MINOS or MitOS complex. The MICOS complex associates with mitochondrial outer membrane proteins SAMM50, MTX1 and MTX2 (together described as components of the mitochondrial outer membrane sorting assembly machinery (SAM) complex) and DNAJC11, mitochondrial inner membrane protein TMEM11 and with HSPA9. The MICOS and SAM complexes together with DNAJC11 are part of a large protein complex spanning both membranes termed the mitochondrial intermembrane space bridging (MIB) complex. Interacts with MICOS10/MIC10, IMMT/MIC60 and APOO/MIC23/MIC26.

Its subcellular location is the mitochondrion inner membrane. The protein localises to the mitochondrion. Its function is as follows. Component of the MICOS complex, a large protein complex of the mitochondrial inner membrane that plays crucial roles in the maintenance of crista junctions, inner membrane architecture, and formation of contact sites to the outer membrane. Specifically binds to cardiolipin (in vitro) but not to the precursor lipid phosphatidylglycerol. Plays a crucial role in crista junction formation and mitochondrial function,. This chain is MICOS complex subunit MIC27 (APOOL), found in Homo sapiens (Human).